We begin with the raw amino-acid sequence, 319 residues long: G-protein coupled receptor 171 (319 aa).

The Extracellular portion of the chain corresponds to 1–21 (MTNSSTFCPVYRDLEPFTYFF). Asparagine 3 carries N-linked (GlcNAc...) asparagine glycosylation. The chain crosses the membrane as a helical span at residues 22-42 (YLVFLIGIIGSCFATWAFIQK). The Cytoplasmic segment spans residues 43 to 48 (TTNHRC). A helical membrane pass occupies residues 49 to 69 (VSIYLINLLTADFLLTLALPV). The Extracellular portion of the chain corresponds to 70-89 (KIIVDLGVAPWKLRIFHCQV). Residues 90–110 (TACLIYINMYLSIIFLAFVSI) traverse the membrane as a helical segment. The Cytoplasmic segment spans residues 111–132 (DRCLQLIHSCKIYRIQEPGFAK). A helical membrane pass occupies residues 133–153 (MISAVVWLMVLLIMVPNMVIP). The Extracellular segment spans residues 154 to 181 (IKDIKEKSNVGCMEFKKEFGRNWHLLTN). Residues 182 to 202 (FICVAIFLNFSVIILISNFLA) form a helical membrane-spanning segment. The Cytoplasmic portion of the chain corresponds to 203–224 (IRQLYRNRDNTNYPSVKSALLH). A helical transmembrane segment spans residues 225–245 (ILLVTASYIICFVPYHAVRIP). The Extracellular segment spans residues 246–268 (YTLSQTEVISDCSTRIALFKAKE). The chain crosses the membrane as a helical span at residues 269–289 (ATLLLAVSNLCFDPILYYHLS). The Cytoplasmic segment spans residues 290–319 (KAFRLKVTETFASPKKSKPLEERLRSENDV).

This sequence belongs to the G-protein coupled receptor 1 family. Highly expressed in hypothalamus, including the arcuate nucleus, paraventricular nucleus and dorsomedial hypothalamus. Expressed in periaqueductal gray (at protein level), found primarily in GABAergic neurons and to a lesser extent in glutamatergic neurons. Expressed in T cells and natural killer cells.

It is found in the cell membrane. In terms of biological role, G-protein coupled receptor for Big LEN, a 16-amino acid neuropeptide produced from the precursor protein, proSAAS (encoded by PCSK1N). Acts through a G(i)-alpha-mediated pathway in response to Big LEN. Big LEN-GPR171 system plays an important role in regulating feeding and metabolism. Also plays a role in modulating fear and anxiety-like behaviors in the basolateral amygdala. Big LEN-GPR171 modulates the mu-type opioid receptor signaling and antinociception. Acts as a negative regulator T cell function. The chain is G-protein coupled receptor 171 (Gpr171) from Mus musculus (Mouse).